A 46-amino-acid chain; its full sequence is Small, acid-soluble spore protein N (46 aa).

The segment at 1–46 (MAKMKHGSAQFRPDHLGTQPRKSDANKGKKMNTKGNENPQYIPPKG) is disordered.

The protein belongs to the SspN family.

The protein resides in the spore core. The sequence is that of Small, acid-soluble spore protein N from Halalkalibacterium halodurans (strain ATCC BAA-125 / DSM 18197 / FERM 7344 / JCM 9153 / C-125) (Bacillus halodurans).